Here is a 394-residue protein sequence, read N- to C-terminus: MTKPNHELSPALIVLMSIATGLAVASNYYAQPLLDTIARNFSLSASSAGFIVTAAQLGYAAGLLFLVPLGDMFERRRLIVSMTLLAAGGMLITASSQSLAMMILGTALTGLFSVVAQILVPLAATLASPDKRGKVVGTIMSGLLLGILLARTVAGLLANLGGWRTVFWVASVLMALMALALWRGLPQMKSETHLNYPQLLGSVFSMFISDKILRTRALLGCLTFANFSILWTSMAFLLAAPPFNYSDGVIGLFGLAGAAGALGARPAGGFADKGKSHHTTTFGLLLLLLSWLAIWFGHTSVLALIIGILVLDLTVQGVHITNQTVIYRIHPDARNRLTAGYMTSYFIGGAAGSLISASAWQHGGWAGVCLAGATIALVNLLVWWRGFHRQEAAN.

11 consecutive transmembrane segments (helical) span residues 10–30 (PALIVLMSIATGLAVASNYYA), 50–70 (FIVTAAQLGYAAGLLFLVPLG), 79–99 (IVSMTLLAAGGMLITASSQSL), 100–120 (AMMILGTALTGLFSVVAQILV), 138–158 (TIMSGLLLGILLARTVAGLLA), 166–186 (VFWVASVLMALMALALWRGLP), 218–238 (LLGCLTFANFSILWTSMAFLL), 243–263 (FNYSDGVIGLFGLAGAAGALG), 291–311 (WLAIWFGHTSVLALIIGILVL), 337–357 (LTAGYMTSYFIGGAAGSLISA), and 364–384 (GWAGVCLAGATIALVNLLVWW).

It belongs to the major facilitator superfamily.

It localises to the cell inner membrane. This is an uncharacterized protein from Escherichia coli (strain K12).